The following is a 467-amino-acid chain: Venom prothrombin activator omicarin-C catalytic subunit (467 aa).

Residues 1–20 (MAPQLLLCLILTFLWSLPEA) form the signal peptide. The propeptide occupies 21 to 40 (ESNVFLKSKVANRFLQRTKR). The Gla domain maps to 41–86 (ANSLFEEFRSGNIERECIEERCSKEEAREVFEDDEKTETFWNVYVD). 11 positions are modified to 4-carboxyglutamate: glutamate 46, glutamate 47, glutamate 54, glutamate 56, glutamate 59, glutamate 60, glutamate 65, glutamate 66, glutamate 69, glutamate 72, and glutamate 75. Cysteine 57 and cysteine 62 are oxidised to a cystine. Residues 86–122 (DGDQCSSNPCHYRGTCKDGIGSYTCTCLFGYEGKNCE) enclose the EGF-like 1; calcium-binding domain. Disulfide bonds link cysteine 90–cysteine 101, cysteine 95–cysteine 110, cysteine 112–cysteine 121, cysteine 129–cysteine 140, cysteine 136–cysteine 149, cysteine 151–cysteine 164, cysteine 172–cysteine 329, cysteine 216–cysteine 221, cysteine 236–cysteine 252, cysteine 377–cysteine 391, and cysteine 402–cysteine 430. O-linked (Hex...) serine glycosylation occurs at serine 92. In terms of domain architecture, EGF-like 2 spans 129 to 164 (CRVDNGNCWHFCKPVQNDIQCSCAEGYLLGEDGHSC). The propeptide at 182-209 (REASLPDFVQSQNATLLKKSDNPSPDIR) is activation peptide. In terms of domain architecture, Peptidase S1 spans 210 to 454 (IVNGMDCKLG…FILWIKRIMR (245 aa)). Histidine 251 (charge relay system) is an active-site residue. Asparagine 254 carries an N-linked (GlcNAc...) asparagine glycan. Aspartate 309 functions as the Charge relay system in the catalytic mechanism. The Charge relay system role is filled by serine 406.

The protein belongs to the peptidase S1 family. Snake venom subfamily. As to quaternary structure, heterodimer of a light and a heavy chains; disulfide-linked. Is associated with omicarin-C non-catalytic subunit (AC Q58L90) in a non-covalent manner. Post-translationally, gamma-carboxyglutamate residues are formed by vitamin K dependent carboxylation. These residues are essential for the binding of calcium. In terms of tissue distribution, expressed by the venom gland.

It is found in the secreted. The catalysed reaction is Selective cleavage of Arg-|-Thr and then Arg-|-Ile bonds in prothrombin to form thrombin.. Its activity is regulated as follows. Activated by calcium and negatively charged phospholipids. Snake prothrombin activator that attacks the hemostatic system of prey. This catalytic subunit is functionally similar to blood coagulation factor Xa. It requires a non-catalytic subunit present in the venom, which is similar to coagulation factor Va, to be fully active. This is Venom prothrombin activator omicarin-C catalytic subunit from Oxyuranus microlepidotus (Inland taipan).